The following is a 478-amino-acid chain: Probable cytosolic Fe-S cluster assembly factor AAEL012261 (478 aa).

Residues Cys23, Cys69, Cys72, Cys75, Cys189, Cys245, Cys396, and Cys400 each contribute to the [4Fe-4S] cluster site.

The protein belongs to the NARF family.

Component of the cytosolic iron-sulfur (Fe/S) protein assembly machinery. Required for maturation of extramitochondrial Fe/S proteins. The chain is Probable cytosolic Fe-S cluster assembly factor AAEL012261 from Aedes aegypti (Yellowfever mosquito).